Here is a 221-residue protein sequence, read N- to C-terminus: Vesicle-associated membrane protein 713 (221 aa).

Alanine 2 carries the N-acetylalanine modification. Over 2 to 190 (AIIFALVARG…RTIMWWRNVK (189 aa)) the chain is Cytoplasmic. In terms of domain architecture, Longin spans 7–112 (LVARGTVVLS…SMNDEFSRVL (106 aa)). In terms of domain architecture, v-SNARE coiled-coil homology spans 127–187 (RMSRIKGEMS…RRYRTIMWWR (61 aa)). Residues 191 to 211 (LTIALILVLALVVYIAMAFVC) form a helical; Anchor for type IV membrane protein membrane-spanning segment. The Vesicular segment spans residues 212 to 221 (HGPSLPSCFK).

The protein belongs to the synaptobrevin family. As to quaternary structure, interacts with subunits of the vacuole protein sorting (HOPS) complex including VPS11, VCL1, VPS18, VPS33, VPS39 and VPS41. As to expression, highly expressed in stems and roots. Detected in flowers and leaves.

Its subcellular location is the vacuole membrane. It localises to the prevacuolar compartment membrane. Involved in the targeting and/or fusion of transport vesicles to their target membrane. The protein is Vesicle-associated membrane protein 713 of Arabidopsis thaliana (Mouse-ear cress).